Consider the following 429-residue polypeptide: Glutamate-1-semialdehyde 2,1-aminomutase 2 (429 aa).

Position 268 is an N6-(pyridoxal phosphate)lysine (Lys268).

Belongs to the class-III pyridoxal-phosphate-dependent aminotransferase family. HemL subfamily. As to quaternary structure, homodimer. Pyridoxal 5'-phosphate serves as cofactor.

The protein resides in the cytoplasm. The enzyme catalyses (S)-4-amino-5-oxopentanoate = 5-aminolevulinate. Its pathway is porphyrin-containing compound metabolism; protoporphyrin-IX biosynthesis; 5-aminolevulinate from L-glutamyl-tRNA(Glu): step 2/2. This chain is Glutamate-1-semialdehyde 2,1-aminomutase 2, found in Staphylococcus aureus (strain MRSA252).